A 32-amino-acid chain; its full sequence is Ranatuerin-3 (32 aa).

Residues cysteine 23 and cysteine 28 are joined by a disulfide bond.

This sequence belongs to the frog skin active peptide (FSAP) family. Ranatuerin subfamily. In terms of tissue distribution, expressed by the skin glands.

Its subcellular location is the secreted. Functionally, antibacterial activity against Gram-positive bacterium S.aureus (MIC=60 uM). Shows no detectable hemolytic activity towards human erythrocytes. The protein is Ranatuerin-3 of Aquarana catesbeiana (American bullfrog).